Reading from the N-terminus, the 202-residue chain is Peptidyl-tRNA hydrolase (202 aa).

TRNA is bound at residue Tyr-14. The Proton acceptor role is filled by His-19. Residues Tyr-64, Asn-66, and Asn-112 each coordinate tRNA.

This sequence belongs to the PTH family. Monomer.

Its subcellular location is the cytoplasm. The enzyme catalyses an N-acyl-L-alpha-aminoacyl-tRNA + H2O = an N-acyl-L-amino acid + a tRNA + H(+). Functionally, hydrolyzes ribosome-free peptidyl-tRNAs (with 1 or more amino acids incorporated), which drop off the ribosome during protein synthesis, or as a result of ribosome stalling. Catalyzes the release of premature peptidyl moieties from peptidyl-tRNA molecules trapped in stalled 50S ribosomal subunits, and thus maintains levels of free tRNAs and 50S ribosomes. This Xanthobacter autotrophicus (strain ATCC BAA-1158 / Py2) protein is Peptidyl-tRNA hydrolase.